Reading from the N-terminus, the 184-residue chain is Photosystem I assembly protein Ycf4 (184 aa).

Helical transmembrane passes span 19-39 (ISNF…LLVG) and 57-77 (IIFF…LFIS).

The protein belongs to the Ycf4 family.

The protein resides in the plastid. Its subcellular location is the chloroplast thylakoid membrane. Functionally, seems to be required for the assembly of the photosystem I complex. The sequence is that of Photosystem I assembly protein Ycf4 from Solanum bulbocastanum (Wild potato).